A 317-amino-acid polypeptide reads, in one-letter code: Melanoma-associated antigen 4 (317 aa).

Residues 1–14 (MSSEQKSQHCKPEE) show a composition bias toward basic and acidic residues. The interval 1–102 (MSSEQKSQHC…EEGPSTSPDA (102 aa)) is disordered. Polar residues predominate over residues 66-82 (PQGASALPTTISFTCWR). One can recognise an MAGE domain in the interval 110-309 (LSNKVDELAH…IAYPSLREAA (200 aa)).

In terms of tissue distribution, expressed in many tumors of several types, such as melanoma, head and neck squamous cell carcinoma, lung carcinoma and breast carcinoma, but not in normal tissues except for testes and placenta.

Regulates cell proliferation through the inhibition of cell cycle arrest at the G1 phase. Also negatively regulates p53-mediated apoptosis. The sequence is that of Melanoma-associated antigen 4 (MAGEA4) from Homo sapiens (Human).